The primary structure comprises 296 residues: Sperm-activating peptides (296 aa).

Propeptides lie at residues Met-1–Lys-134, Met-146–Lys-190, and Glu-290–Trp-296.

Its function is as follows. Causes stimulation of sperm respiration and motility through intracellular alkalinization, transient elevations of cAMP, cGMP and calcium levels in sperm cells, and transient activation and subsequent inactivation of the membrane form of guanylate cyclase. In Strongylocentrotus purpuratus (Purple sea urchin), this protein is Sperm-activating peptides.